The primary structure comprises 376 residues: Flagellin B (376 aa).

The stretch at 103–129 forms a coiled coil; it reads SNSSSERRAIQEEVSALNDELNRIAET.

This sequence belongs to the bacterial flagellin family. As to quaternary structure, heteromer of multiple flagellin subunits including FlaA, FlaB, FlaC, FlaD and FlaE.

It is found in the secreted. It localises to the bacterial flagellum. In terms of biological role, flagellin is the subunit protein which polymerizes to form the filaments of bacterial flagella. FlaB is not essential for flagellar synthesis and motility. The sequence is that of Flagellin B (flaB) from Vibrio cholerae serotype O1 (strain ATCC 39541 / Classical Ogawa 395 / O395).